A 156-amino-acid chain; its full sequence is MMKGVIIDLQIVSEDQTNLPTPEQFTQWATAAVRAEALEPEITIRIVDEAESHDLNLTYRGKDRPTNVLSFPFECPEEVELPLLGDLVICRQVVEREAEQQGKPLPAHWAHMVVHGCLHLLGYDHIEDDEAVEMESLETQIMTELGFEDPYSYDEI.

3 residues coordinate Zn(2+): H115, H119, and H125.

This sequence belongs to the endoribonuclease YbeY family. It depends on Zn(2+) as a cofactor.

The protein resides in the cytoplasm. Its function is as follows. Single strand-specific metallo-endoribonuclease involved in late-stage 70S ribosome quality control and in maturation of the 3' terminus of the 16S rRNA. This is Endoribonuclease YbeY from Actinobacillus succinogenes (strain ATCC 55618 / DSM 22257 / CCUG 43843 / 130Z).